The following is a 222-amino-acid chain: uncharacterized protein (222 aa).

The segment at residues 1–27 is a signal peptide (tat-type signal); the sequence is MSFTRRKFVLGMGTVIFFTGSASSLLA. 4Fe-4S ferredoxin-type domains follow at residues 37–67, 83–114, and 115–144; these read YAMIHDESRCNGCNICARACRKTNHVPAQGS, TQYHFFRQSCQHCEDAPCIDVCPTGASWRDEQ, and GIVRVEKSQCIGCSYCIGACPYQVRYLNPV. [4Fe-4S] cluster is bound by residues C46, C49, C52, C56, C92, C95, C100, C104, C124, C127, C130, C134, C151, C154, C167, and C171.

Post-translationally, exported by the Tat system. The position of the signal peptide cleavage has not been experimentally proven. Can also be exported by the Sec system.

This is an uncharacterized protein from Escherichia coli (strain K12).